The sequence spans 419 residues: UDP-N-acetylglucosamine 1-carboxyvinyltransferase (419 aa).

Position 22–23 (22–23) interacts with phosphoenolpyruvate; sequence KN. Arginine 91 is a binding site for UDP-N-acetyl-alpha-D-glucosamine. Catalysis depends on cysteine 115, which acts as the Proton donor. Cysteine 115 is subject to 2-(S-cysteinyl)pyruvic acid O-phosphothioketal. UDP-N-acetyl-alpha-D-glucosamine-binding positions include 120 to 124, 160 to 163, aspartate 305, and valine 327; these read RPVDL and KVSV.

The protein belongs to the EPSP synthase family. MurA subfamily.

The protein localises to the cytoplasm. It carries out the reaction phosphoenolpyruvate + UDP-N-acetyl-alpha-D-glucosamine = UDP-N-acetyl-3-O-(1-carboxyvinyl)-alpha-D-glucosamine + phosphate. Its pathway is cell wall biogenesis; peptidoglycan biosynthesis. Cell wall formation. Adds enolpyruvyl to UDP-N-acetylglucosamine. This is UDP-N-acetylglucosamine 1-carboxyvinyltransferase from Shigella dysenteriae serotype 1 (strain Sd197).